The chain runs to 445 residues: Chromosome partition protein MukF (445 aa).

The interval 213-241 is leucine-zipper; it reads LSETSSTLRELQDTLQAASDELQTQILDI.

This sequence belongs to the MukF family. Interacts, and probably forms a ternary complex, with MukE and MukB via its C-terminal region. The complex formation is stimulated by calcium or magnesium. It is required for an interaction between MukE and MukB.

It is found in the cytoplasm. The protein localises to the nucleoid. Its function is as follows. Involved in chromosome condensation, segregation and cell cycle progression. May participate in facilitating chromosome segregation by condensation DNA from both sides of a centrally located replisome during cell division. Not required for mini-F plasmid partitioning. Probably acts via its interaction with MukB and MukE. Overexpression results in anucleate cells. It has a calcium binding activity. The polypeptide is Chromosome partition protein MukF (Vibrio campbellii (strain ATCC BAA-1116)).